The sequence spans 634 residues: Kelch-like protein 31 (634 aa).

Ala2 carries the n,N,N-trimethylalanine modification. Positions 73-137 (CDLVIGTKTK…AYTGKLTLSL (65 aa)) constitute a BTB domain. One can recognise a BACK domain in the interval 172-273 (CMYVVNIAET…SAQDLVNYVQ (102 aa)). 6 Kelch repeats span residues 317-365 (VLVT…VMDG), 366-419 (FLYV…VFNG), 420-466 (LVYA…VADG), 468-513 (VLVT…TLSD), 515-565 (VYVM…ALHG), and 567-614 (AYLV…TLSM).

N-terminus is methylated by METTL11A/NTM1. In terms of tissue distribution, strongly expressed in skeletal muscle and weakly in heart. According to PubMed:15302408, not expressed in other tissues. According to PubMed:18719355, abundantly expressed in both embryonic skeletal and heart tissues.

Transcriptional repressor in MAPK/JNK signaling pathway to regulate cellular functions. Overexpression inhibits the transcriptional activities of both the TPA-response element (TRE) and serum response element (SRE). The protein is Kelch-like protein 31 (KLHL31) of Homo sapiens (Human).